A 147-amino-acid chain; its full sequence is Mannitol-specific cryptic phosphotransferase enzyme IIA component (147 aa).

Positions 5 to 147 constitute a PTS EIIA type-2 domain; it reads DYFPESSISV…KQLADIISRG (143 aa). The active-site Tele-phosphohistidine intermediate is the His67. His67 carries the post-translational modification Phosphohistidine; by HPr.

It localises to the cytoplasm. Its function is as follows. The phosphoenolpyruvate-dependent sugar phosphotransferase system (sugar PTS), a major carbohydrate active transport system, catalyzes the phosphorylation of incoming sugar substrates concomitantly with their translocation across the cell membrane. The enzyme II CmtAB PTS system is involved in D-mannitol transport. This Escherichia coli O157:H7 protein is Mannitol-specific cryptic phosphotransferase enzyme IIA component (cmtB).